An 84-amino-acid polypeptide reads, in one-letter code: Putative lipoprotein RzoQ (84 aa).

An N-terminal signal peptide occupies residues 1 to 22 (MRNRNLLKFLPGLLICLIVLTS). The N-palmitoyl cysteine moiety is linked to residue Cys-23. The S-diacylglycerol cysteine moiety is linked to residue Cys-23.

It is found in the cell membrane. The chain is Putative lipoprotein RzoQ (rzoQ) from Escherichia coli (strain K12).